The chain runs to 304 residues: Glutaminase (304 aa).

The substrate site is built by S63, N114, E158, N165, Y189, Y240, and V258.

This sequence belongs to the glutaminase family. As to quaternary structure, homotetramer.

It catalyses the reaction L-glutamine + H2O = L-glutamate + NH4(+). The protein is Glutaminase of Shewanella putrefaciens (strain CN-32 / ATCC BAA-453).